Here is a 213-residue protein sequence, read N- to C-terminus: Probable nicotinate-nucleotide adenylyltransferase (213 aa).

It belongs to the NadD family.

It catalyses the reaction nicotinate beta-D-ribonucleotide + ATP + H(+) = deamido-NAD(+) + diphosphate. The protein operates within cofactor biosynthesis; NAD(+) biosynthesis; deamido-NAD(+) from nicotinate D-ribonucleotide: step 1/1. Its function is as follows. Catalyzes the reversible adenylation of nicotinate mononucleotide (NaMN) to nicotinic acid adenine dinucleotide (NaAD). The chain is Probable nicotinate-nucleotide adenylyltransferase from Escherichia coli O139:H28 (strain E24377A / ETEC).